The chain runs to 371 residues: Uroporphyrinogen decarboxylase (371 aa).

Over residues M1–T14 the composition is skewed to polar residues. Residues M1–P30 are disordered. Substrate-binding positions include R49–R53, D98, Y173, S228, and H342.

This sequence belongs to the uroporphyrinogen decarboxylase family. In terms of assembly, homodimer.

It localises to the cytoplasm. It carries out the reaction uroporphyrinogen III + 4 H(+) = coproporphyrinogen III + 4 CO2. Its pathway is porphyrin-containing compound metabolism; protoporphyrin-IX biosynthesis; coproporphyrinogen-III from 5-aminolevulinate: step 4/4. Its function is as follows. Catalyzes the decarboxylation of four acetate groups of uroporphyrinogen-III to yield coproporphyrinogen-III. The polypeptide is Uroporphyrinogen decarboxylase (Salinispora tropica (strain ATCC BAA-916 / DSM 44818 / JCM 13857 / NBRC 105044 / CNB-440)).